The sequence spans 266 residues: Metallo-beta-lactamase VIM-1 (266 aa).

Residues 1–20 (MLKVISSLLVYMTASVMAVA) form the signal peptide. Zn(2+) contacts are provided by H114, H116, D118, H179, C198, and H240.

The protein belongs to the metallo-beta-lactamase superfamily. Class-B beta-lactamase family. In terms of assembly, monomer. It depends on Zn(2+) as a cofactor.

It is found in the periplasm. The catalysed reaction is a beta-lactam + H2O = a substituted beta-amino acid. Weakly inhibited by beta-lactamase-blocking agent sulbactam. Class B beta-lactamase which confers resistance to the beta-lactam antibiotics, including penicillins, cephalosporins and carbapenems. Acts via hydrolysis of the beta-lactam ring. Has penicillin-, cephalosporin- and carbapenem-hydrolyzing activities. The protein is Metallo-beta-lactamase VIM-1 of Pseudomonas aeruginosa (strain ATCC 15692 / DSM 22644 / CIP 104116 / JCM 14847 / LMG 12228 / 1C / PRS 101 / PAO1).